The sequence spans 193 residues: dITP/XTP pyrophosphatase (193 aa).

7-12 (SENENK) contributes to the substrate binding site. Asp-65 acts as the Proton acceptor in catalysis. Asp-65 lines the Mg(2+) pocket. Substrate is bound by residues Ser-66, 144–147 (FGYD), Lys-167, and 172–173 (HR).

The protein belongs to the HAM1 NTPase family. As to quaternary structure, homodimer. Mg(2+) is required as a cofactor.

The enzyme catalyses XTP + H2O = XMP + diphosphate + H(+). It catalyses the reaction dITP + H2O = dIMP + diphosphate + H(+). The catalysed reaction is ITP + H2O = IMP + diphosphate + H(+). Functionally, pyrophosphatase that catalyzes the hydrolysis of nucleoside triphosphates to their monophosphate derivatives, with a high preference for the non-canonical purine nucleotides XTP (xanthosine triphosphate), dITP (deoxyinosine triphosphate) and ITP. Seems to function as a house-cleaning enzyme that removes non-canonical purine nucleotides from the nucleotide pool, thus preventing their incorporation into DNA/RNA and avoiding chromosomal lesions. This Tropheryma whipplei (strain Twist) (Whipple's bacillus) protein is dITP/XTP pyrophosphatase.